The sequence spans 340 residues: MLDPRARTLLKTLIERYIADGQPVGSRTLSRYSGLELSPATIRNVMSDLEELGLVSSPHTSAGRVPTPRGYRLFVDTMLTVEAPIDAEAVARQVQNTLQAGEPQQRVVAAAASVLSNLSQFAGVVLTPRRSHVFKQIEFMRLSDKRILLIIVTPEGDVQNRMLATPRDYTPSQLTEASNYINAHFAGLSFDEVRRRLRDEIDQLRGDMTTLMHAAVTASTEVPDTEDTVLISGERNLLEVADLSSDMARLRKLFDVFDQKTGLLQLLDVSSHAQGVQIFIGGESTLVPIEEMSVVTAPYEVNGKIVGTLGVIGPTRMAYNRVIPIVDITARLLSLALSQQ.

Belongs to the HrcA family.

Negative regulator of class I heat shock genes (grpE-dnaK-dnaJ and groELS operons). Prevents heat-shock induction of these operons. The protein is Heat-inducible transcription repressor HrcA of Burkholderia vietnamiensis (strain G4 / LMG 22486) (Burkholderia cepacia (strain R1808)).